A 119-amino-acid chain; its full sequence is Large ribosomal subunit protein uL18 (119 aa).

It belongs to the universal ribosomal protein uL18 family. As to quaternary structure, part of the 50S ribosomal subunit; part of the 5S rRNA/L5/L18/L25 subcomplex. Contacts the 5S and 23S rRNAs.

Its function is as follows. This is one of the proteins that bind and probably mediate the attachment of the 5S RNA into the large ribosomal subunit, where it forms part of the central protuberance. The protein is Large ribosomal subunit protein uL18 of Cupriavidus necator (strain ATCC 17699 / DSM 428 / KCTC 22496 / NCIMB 10442 / H16 / Stanier 337) (Ralstonia eutropha).